The chain runs to 538 residues: Probable inorganic phosphate transporter 1-4 (538 aa).

Over 1–23 (MAGELKVLNALDSAKTQWYHFTA) the chain is Cytoplasmic. A helical transmembrane segment spans residues 24 to 44 (IVIAGMGFFTDAYDLFSISLV). The Extracellular segment spans residues 45–69 (TKLLGRIYYFNPASKSPGSLPPNVS). Residues 70–90 (AAVNGVAFCGTLAGQLFFGWL) traverse the membrane as a helical segment. At 91–98 (GDKMGRKK) the chain is on the cytoplasmic side. Residues 99–119 (VYGMTLMLMVICCLASGLSFG) form a helical membrane-spanning segment. Over 120-123 (SSAK) the chain is Extracellular. Residues 124–144 (GVMATLCFFRFWLGFGIGGDY) traverse the membrane as a helical segment. The Cytoplasmic segment spans residues 145–163 (PLSATIMSEYANKRTRGAF). Residues 164–184 (IAAVFAMQGFGNLTGGIVAII) traverse the membrane as a helical segment. Topologically, residues 185 to 210 (VSAAFKSRFDAPAYRDDRTGSTVPQA) are extracellular. A helical transmembrane segment spans residues 211–231 (DYAWRIVLMFGAIPALLTYYW). Over 232-294 (RMKMPETARY…RQFLRRHGRH (63 aa)) the chain is Cytoplasmic. A helical membrane pass occupies residues 295 to 315 (LLGTTVCWFVLDIAFYSSNLF). Residues 316-346 (QKDIYTAVQWLPKADTMSALEEMFKISRAQT) are Extracellular-facing. A helical transmembrane segment spans residues 347–367 (LVALCGTIPGYWFTVFFIDII). Residues 368–369 (GR) are Cytoplasmic-facing. A helical transmembrane segment spans residues 370-390 (FVIQLGGFFFMTAFMLGLAVP). Residues 391-396 (YHHWTT) lie on the Extracellular side of the membrane. Residues 397–417 (PGNHIGFVVMYAFTFFFANFG) traverse the membrane as a helical segment. The Cytoplasmic portion of the chain corresponds to 418–440 (PNSTTFIVPAEIFPARLRSTCHG). A helical membrane pass occupies residues 441 to 461 (ISAAAGKAGAIVGSFGFLYAA). Residues 462–481 (QSTDASKTDAGYPPGIGVRN) are Extracellular-facing. Residues 482-502 (SLFFLAGCNVIGFFFTFLVPE) traverse the membrane as a helical segment. Topologically, residues 503-538 (SKGKSLEELSGENEDDDDVPEAPATADHRTAPAPPA) are cytoplasmic. Residues 507-538 (SLEELSGENEDDDDVPEAPATADHRTAPAPPA) form a disordered region. A compositionally biased stretch (acidic residues) spans 511-522 (LSGENEDDDDVP).

This sequence belongs to the major facilitator superfamily. Phosphate:H(+) symporter (TC 2.A.1.9) family. In terms of tissue distribution, expressed at low levels in roots.

The protein localises to the membrane. In terms of biological role, high-affinity transporter for external inorganic phosphate. This chain is Probable inorganic phosphate transporter 1-4 (PHT1-4), found in Oryza sativa subsp. japonica (Rice).